The following is a 225-amino-acid chain: MASVEQPNKPKLKLYSYFRSSCSFRVRIALNLKGLDYEYVPVNLLKGEQFTPEFLKINPIGYVPALVDGEDVISDSFAILMYLEEKYPEHPILPADIHKKAINYQAANIVSSSIQPLQNLAVLNFIGEKVSPDEKVPWVQRHISKGFAALEKLLQGHAGRFATGDEVYLADLFLEPQIHAAITRFNVDMTQFPLLLRLHEAYSQLPEFQNAMPDKQPDSTSPTAS.

Residues 10–91 enclose the GST N-terminal domain; that stretch reads PKLKLYSYFR…YLEEKYPEHP (82 aa). Glutathione contacts are provided by residues 20–25, glutamine 49, valine 63, 75–76, glutamine 115, and 119–121; these read SSCSFR, DS, and NLA. The GST C-terminal domain occupies 96 to 221; sequence DIHKKAINYQ…MPDKQPDSTS (126 aa).

The protein belongs to the GST superfamily. Zeta family.

It is found in the cytoplasm. It catalyses the reaction RX + glutathione = an S-substituted glutathione + a halide anion + H(+). This chain is Glutathione S-transferase zeta class, found in Euphorbia esula (Leafy spurge).